We begin with the raw amino-acid sequence, 78 residues long: Acyl carrier protein (78 aa).

The 76-residue stretch at 2–77 (SNIEQQVKKI…LAIDYINAHN (76 aa)) folds into the Carrier domain. S37 is subject to O-(pantetheine 4'-phosphoryl)serine.

Belongs to the acyl carrier protein (ACP) family. Post-translationally, 4'-phosphopantetheine is transferred from CoA to a specific serine of apo-ACP by AcpS. This modification is essential for activity because fatty acids are bound in thioester linkage to the sulfhydryl of the prosthetic group.

It localises to the cytoplasm. It functions in the pathway lipid metabolism; fatty acid biosynthesis. Its function is as follows. Carrier of the growing fatty acid chain in fatty acid biosynthesis. In Neisseria meningitidis serogroup C / serotype 2a (strain ATCC 700532 / DSM 15464 / FAM18), this protein is Acyl carrier protein.